The chain runs to 627 residues: Phosphomethylpyrimidine synthase (627 aa).

Positions 1-24 are enriched in polar residues; it reads MSATQKNNITRLEQLDRQSTQPFP. The disordered stretch occupies residues 1–29; it reads MSATQKNNITRLEQLDRQSTQPFPNSRKV. Residues Asn-231, Met-260, Tyr-289, His-325, 345–347, 386–389, and Glu-425 each bind substrate; these read SRG and DGLR. His-429 serves as a coordination point for Zn(2+). Tyr-452 contributes to the substrate binding site. His-493 provides a ligand contact to Zn(2+). Residues Cys-573, Cys-576, and Cys-581 each contribute to the [4Fe-4S] cluster site.

It belongs to the ThiC family. As to quaternary structure, homodimer. [4Fe-4S] cluster serves as cofactor.

The enzyme catalyses 5-amino-1-(5-phospho-beta-D-ribosyl)imidazole + S-adenosyl-L-methionine = 4-amino-2-methyl-5-(phosphooxymethyl)pyrimidine + CO + 5'-deoxyadenosine + formate + L-methionine + 3 H(+). It functions in the pathway cofactor biosynthesis; thiamine diphosphate biosynthesis. In terms of biological role, catalyzes the synthesis of the hydroxymethylpyrimidine phosphate (HMP-P) moiety of thiamine from aminoimidazole ribotide (AIR) in a radical S-adenosyl-L-methionine (SAM)-dependent reaction. In Pseudomonas aeruginosa (strain UCBPP-PA14), this protein is Phosphomethylpyrimidine synthase.